We begin with the raw amino-acid sequence, 165 residues long: E3 ubiquitin-protein ligase RNF181 (165 aa).

The RING-type; atypical zinc-finger motif lies at 88–129; the sequence is CPVCLLEFEEEETVIEMPCHHLFHSNCILPWLSKTNSCPLCR. The disordered stretch occupies residues 136–165; it reads DDSYEEHKKDKARRQQQQHRLENLHGAMYT. Thr165 carries the post-translational modification Phosphothreonine.

Belongs to the RNF181 family. In terms of assembly, directly interacts with ITGA2B and, as a result, with integrin ITGA2B/ITGB3. There is no evidence that integrin ITGA2B/ITGB3 is an endogenous substrate for RNF181-directed ubiquitination. Post-translationally, auto-ubiquitinated as part of the enzymatic reaction.

The enzyme catalyses S-ubiquitinyl-[E2 ubiquitin-conjugating enzyme]-L-cysteine + [acceptor protein]-L-lysine = [E2 ubiquitin-conjugating enzyme]-L-cysteine + N(6)-ubiquitinyl-[acceptor protein]-L-lysine.. It functions in the pathway protein modification; protein ubiquitination. In terms of biological role, E3 ubiquitin-protein ligase which accepts ubiquitin from an E2 ubiquitin-conjugating enzyme in the form of a thioester and then directly transfers the ubiquitin to targeted substrates. Catalyzes monoubiquitination of 26S proteasome subunit PSMC2/RPT1. This chain is E3 ubiquitin-protein ligase RNF181 (Rnf181), found in Rattus norvegicus (Rat).